A 103-amino-acid chain; its full sequence is Thioredoxin-1 (103 aa).

The Thioredoxin domain maps to 2–103 (VKQVSDSSEF…KLEASIKANL (102 aa)). Residues cysteine 30 and cysteine 33 each act as nucleophile in the active site. Cysteine 30 and cysteine 33 are oxidised to a cystine.

Belongs to the thioredoxin family.

Participates in various redox reactions through the reversible oxidation of its active center dithiol to a disulfide and catalyzes dithiol-disulfide exchange reactions. The chain is Thioredoxin-1 (trx1) from Schizosaccharomyces pombe (strain 972 / ATCC 24843) (Fission yeast).